The sequence spans 208 residues: Putative 3-methyladenine DNA glycosylase (208 aa).

Belongs to the DNA glycosylase MPG family.

This chain is Putative 3-methyladenine DNA glycosylase, found in Lactobacillus delbrueckii subsp. bulgaricus (strain ATCC 11842 / DSM 20081 / BCRC 10696 / JCM 1002 / NBRC 13953 / NCIMB 11778 / NCTC 12712 / WDCM 00102 / Lb 14).